Reading from the N-terminus, the 1465-residue chain is Ankyrin and armadillo repeat-containing protein (1465 aa).

Residues 313–329 form a helical membrane-spanning segment; sequence MGYLKLICFLIPFLLSL. ANK repeat units follow at residues 532–561, 582–611, 615–644, 651–680, and 684–714; these read AGYA…NVNQ, NGPT…DYTL, RGWM…SLLE, NQCT…NWRK, and KGNN…ELPV. 6 ARM repeats span residues 745–784, 786–825, 827–865, 868–907, 910–949, and 1085–1125; these read DRYW…NIST, VSIV…DVAK, ENKD…VLCM, ESNQ…EVAR, KEVQ…SLAN, and PMSQ…CIVL. The interval 1431–1465 is disordered; the sequence is KLGKDEQKANPDPPAFLNKLGKDEQNANPDPAESQ.

Its subcellular location is the membrane. The chain is Ankyrin and armadillo repeat-containing protein (Ankar) from Mus musculus (Mouse).